The chain runs to 447 residues: Na(+)-translocating NADH-quinone reductase subunit A (447 aa).

This sequence belongs to the NqrA family. Composed of six subunits; NqrA, NqrB, NqrC, NqrD, NqrE and NqrF.

It carries out the reaction a ubiquinone + n Na(+)(in) + NADH + H(+) = a ubiquinol + n Na(+)(out) + NAD(+). Its function is as follows. NQR complex catalyzes the reduction of ubiquinone-1 to ubiquinol by two successive reactions, coupled with the transport of Na(+) ions from the cytoplasm to the periplasm. NqrA to NqrE are probably involved in the second step, the conversion of ubisemiquinone to ubiquinol. In Hahella chejuensis (strain KCTC 2396), this protein is Na(+)-translocating NADH-quinone reductase subunit A.